The following is a 77-amino-acid chain: Small ribosomal subunit protein uS17 (77 aa).

The protein belongs to the universal ribosomal protein uS17 family. As to quaternary structure, part of the 30S ribosomal subunit.

Functionally, one of the primary rRNA binding proteins, it binds specifically to the 5'-end of 16S ribosomal RNA. The protein is Small ribosomal subunit protein uS17 of Rickettsia rickettsii (strain Sheila Smith).